The primary structure comprises 186 residues: Lipid A acyltransferase PagP (186 aa).

Positions 1-25 (MNVSKYVAIFSFVFIQLISVGKVFA) are cleaved as a signal peptide. Catalysis depends on residues histidine 58, aspartate 101, and serine 102.

The protein belongs to the lipid A palmitoyltransferase family. As to quaternary structure, homodimer.

The protein resides in the cell outer membrane. It catalyses the reaction a lipid A + a 1,2-diacyl-sn-glycero-3-phosphocholine = a hepta-acyl lipid A + a 2-acyl-sn-glycero-3-phosphocholine. It carries out the reaction a lipid IVA + a 1,2-diacyl-sn-glycero-3-phosphocholine = a lipid IVB + a 2-acyl-sn-glycero-3-phosphocholine. The catalysed reaction is a lipid IIA + a 1,2-diacyl-sn-glycero-3-phosphocholine = a lipid IIB + a 2-acyl-sn-glycero-3-phosphocholine. Transfers a fatty acid residue from the sn-1 position of a phospholipid to the N-linked hydroxyfatty acid chain on the proximal unit of lipid A or its precursors. The sequence is that of Lipid A acyltransferase PagP from Shigella flexneri serotype X (strain 2002017).